A 60-amino-acid polypeptide reads, in one-letter code: Cecropin-B type 2 (60 aa).

Residues 1 to 24 (MNFSKLFALVLLIGLVLLTGQTEA) form the signal peptide. Isoleucine amide is present on I58.

Belongs to the cecropin family.

It is found in the secreted. Functionally, cecropins have lytic and antibacterial activity against several Gram-positive and Gram-negative bacteria. The protein is Cecropin-B type 2 (CECB2) of Aedes albopictus (Asian tiger mosquito).